A 529-amino-acid polypeptide reads, in one-letter code: Bifunctional purine biosynthesis protein PurH (529 aa).

The 148-residue stretch at 1-148 folds into the MGS-like domain; sequence MNNARPIRRA…KNHKDTTIIV (148 aa).

It belongs to the PurH family.

It catalyses the reaction (6R)-10-formyltetrahydrofolate + 5-amino-1-(5-phospho-beta-D-ribosyl)imidazole-4-carboxamide = 5-formamido-1-(5-phospho-D-ribosyl)imidazole-4-carboxamide + (6S)-5,6,7,8-tetrahydrofolate. The catalysed reaction is IMP + H2O = 5-formamido-1-(5-phospho-D-ribosyl)imidazole-4-carboxamide. The protein operates within purine metabolism; IMP biosynthesis via de novo pathway; 5-formamido-1-(5-phospho-D-ribosyl)imidazole-4-carboxamide from 5-amino-1-(5-phospho-D-ribosyl)imidazole-4-carboxamide (10-formyl THF route): step 1/1. It participates in purine metabolism; IMP biosynthesis via de novo pathway; IMP from 5-formamido-1-(5-phospho-D-ribosyl)imidazole-4-carboxamide: step 1/1. This chain is Bifunctional purine biosynthesis protein PurH, found in Shewanella piezotolerans (strain WP3 / JCM 13877).